Reading from the N-terminus, the 287-residue chain is Acetyl-coenzyme A carboxylase carboxyl transferase subunit beta (287 aa).

The CoA carboxyltransferase N-terminal domain occupies M36–H287. 4 residues coordinate Zn(2+): C40, C43, C59, and C62. The C4-type zinc finger occupies C40–C62.

Belongs to the AccD/PCCB family. As to quaternary structure, acetyl-CoA carboxylase is a heterohexamer composed of biotin carboxyl carrier protein (AccB), biotin carboxylase (AccC) and two subunits each of ACCase subunit alpha (AccA) and ACCase subunit beta (AccD). It depends on Zn(2+) as a cofactor.

The protein resides in the cytoplasm. It catalyses the reaction N(6)-carboxybiotinyl-L-lysyl-[protein] + acetyl-CoA = N(6)-biotinyl-L-lysyl-[protein] + malonyl-CoA. Its pathway is lipid metabolism; malonyl-CoA biosynthesis; malonyl-CoA from acetyl-CoA: step 1/1. Component of the acetyl coenzyme A carboxylase (ACC) complex. Biotin carboxylase (BC) catalyzes the carboxylation of biotin on its carrier protein (BCCP) and then the CO(2) group is transferred by the transcarboxylase to acetyl-CoA to form malonyl-CoA. In Clostridium novyi (strain NT), this protein is Acetyl-coenzyme A carboxylase carboxyl transferase subunit beta.